The following is an 889-amino-acid chain: DNA gyrase subunit A (889 aa).

Residues 35–501 (LPDVRDGLKP…GFEDLEDEDL (467 aa)) form the Topo IIA-type catalytic domain. Catalysis depends on Y123, which acts as the O-(5'-phospho-DNA)-tyrosine intermediate. The GyrA-box motif lies at 528-534 (QNRGGRG). Positions 811-889 (KEDAEDETNE…IQQSSDEDEE (79 aa)) are disordered. The segment covering 813 to 823 (DAEDETNEDEQ) has biased composition (acidic residues). Over residues 863–875 (DGRIEVRQDFMDR) the composition is skewed to basic and acidic residues. Acidic residues predominate over residues 876 to 889 (VEEDIQQSSDEDEE).

The protein belongs to the type II topoisomerase GyrA/ParC subunit family. Heterotetramer, composed of two GyrA and two GyrB chains. In the heterotetramer, GyrA contains the active site tyrosine that forms a transient covalent intermediate with DNA, while GyrB binds cofactors and catalyzes ATP hydrolysis.

It localises to the cytoplasm. It catalyses the reaction ATP-dependent breakage, passage and rejoining of double-stranded DNA.. A type II topoisomerase that negatively supercoils closed circular double-stranded (ds) DNA in an ATP-dependent manner to modulate DNA topology and maintain chromosomes in an underwound state. Negative supercoiling favors strand separation, and DNA replication, transcription, recombination and repair, all of which involve strand separation. Also able to catalyze the interconversion of other topological isomers of dsDNA rings, including catenanes and knotted rings. Type II topoisomerases break and join 2 DNA strands simultaneously in an ATP-dependent manner. This Staphylococcus aureus (strain Mu50 / ATCC 700699) protein is DNA gyrase subunit A.